The sequence spans 622 residues: DNA-directed RNA polymerase subunit gamma (622 aa).

Zn(2+)-binding residues include Cys-70, Cys-72, Cys-85, and Cys-88. Mg(2+) contacts are provided by Asp-466, Asp-468, and Asp-470.

The protein belongs to the RNA polymerase beta' chain family. RpoC1 subfamily. In cyanobacteria the RNAP catalytic core is composed of 2 alpha, 1 beta, 1 beta', 1 gamma and 1 omega subunit. When a sigma factor is associated with the core the holoenzyme is formed, which can initiate transcription. The cofactor is Mg(2+). Zn(2+) serves as cofactor.

It carries out the reaction RNA(n) + a ribonucleoside 5'-triphosphate = RNA(n+1) + diphosphate. Functionally, DNA-dependent RNA polymerase catalyzes the transcription of DNA into RNA using the four ribonucleoside triphosphates as substrates. In Cyanothece sp. (strain PCC 7425 / ATCC 29141), this protein is DNA-directed RNA polymerase subunit gamma.